Reading from the N-terminus, the 147-residue chain is Orcokinin peptides (147 aa).

Residues 1-27 form the signal peptide; that stretch reads MPRHSVFALSILALSITATVWIPTVQA. 2 consecutive propeptides follow at residues 28–89 and 146–147; these read ETNL…ERFG and FG.

It belongs to the orcokinin family.

It localises to the secreted. Myotropic peptides. This chain is Orcokinin peptides, found in Apis mellifera (Honeybee).